Reading from the N-terminus, the 460-residue chain is Phosphomethylpyrimidine synthase (460 aa).

Substrate contacts are provided by residues asparagine 80, methionine 109, tyrosine 138, histidine 174, 194–196 (SRG), 235–238 (DSLR), and glutamate 274. Histidine 278 lines the Zn(2+) pocket. Tyrosine 301 contacts substrate. A Zn(2+)-binding site is contributed by histidine 342. [4Fe-4S] cluster contacts are provided by cysteine 422, cysteine 425, and cysteine 430.

Belongs to the ThiC family. Homodimer. Requires [4Fe-4S] cluster as cofactor.

It carries out the reaction 5-amino-1-(5-phospho-beta-D-ribosyl)imidazole + S-adenosyl-L-methionine = 4-amino-2-methyl-5-(phosphooxymethyl)pyrimidine + CO + 5'-deoxyadenosine + formate + L-methionine + 3 H(+). It functions in the pathway cofactor biosynthesis; thiamine diphosphate biosynthesis. Catalyzes the synthesis of the hydroxymethylpyrimidine phosphate (HMP-P) moiety of thiamine from aminoimidazole ribotide (AIR) in a radical S-adenosyl-L-methionine (SAM)-dependent reaction. The protein is Phosphomethylpyrimidine synthase of Sulfurimonas denitrificans (strain ATCC 33889 / DSM 1251) (Thiomicrospira denitrificans (strain ATCC 33889 / DSM 1251)).